A 142-amino-acid chain; its full sequence is Cellulose/chitin binding protein BQ2027_MB2009 (142 aa).

Residues 1–37 (MAGLNIYVRRWRTALHATVSALIVAILGLAITPVASA) form the signal peptide. The region spanning 38 to 142 (ATARATLSVT…CLLNGQYPCT (105 aa)) is the CBM2 domain.

The protein resides in the secreted. Its subcellular location is the cell wall. It is found in the cell membrane. In terms of biological role, carbohydrate binding protein that binds chitin and cellulose. Lacks enzymatic activity and does not hydrolyze chitin and cellulose. May interact with mycobacterial biofilms, which are rich in cellulose, and play a role in biofilm formation. Could also act as an adhesin, improving the initial attachment to host cells and aiding M.bovis during the initial stages of infection. May act as a virulence factor that modulates host immune responses and contributes to host immune evasion. The protein is Cellulose/chitin binding protein BQ2027_MB2009 of Mycobacterium bovis (strain ATCC BAA-935 / AF2122/97).